The following is a 280-amino-acid chain: Putative ABC transporter ATP-binding protein PYRAB03730 (280 aa).

The 241-residue stretch at 4-244 folds into the ABC transporter domain; the sequence is IEVENVSFKY…VEFLERIGIR (241 aa). ATP is bound at residue 38–45; sequence GPSGSGKS.

Belongs to the ABC transporter superfamily.

It localises to the cell membrane. Probably part of an ABC transporter complex. Responsible for energy coupling to the transport system. This chain is Putative ABC transporter ATP-binding protein PYRAB03730, found in Pyrococcus abyssi (strain GE5 / Orsay).